The primary structure comprises 171 residues: Cadmium-induced protein AS8 (171 aa).

The chain is Cadmium-induced protein AS8 from Arabidopsis thaliana (Mouse-ear cress).